A 208-amino-acid polypeptide reads, in one-letter code: Large ribosomal subunit protein uL4 (208 aa).

The protein belongs to the universal ribosomal protein uL4 family. Part of the 50S ribosomal subunit.

Its function is as follows. One of the primary rRNA binding proteins, this protein initially binds near the 5'-end of the 23S rRNA. It is important during the early stages of 50S assembly. It makes multiple contacts with different domains of the 23S rRNA in the assembled 50S subunit and ribosome. Forms part of the polypeptide exit tunnel. This is Large ribosomal subunit protein uL4 from Anaplasma marginale (strain Florida).